A 443-amino-acid polypeptide reads, in one-letter code: Glutamate-1-semialdehyde 2,1-aminomutase (443 aa).

K277 bears the N6-(pyridoxal phosphate)lysine mark.

Belongs to the class-III pyridoxal-phosphate-dependent aminotransferase family. HemL subfamily. Homodimer. Pyridoxal 5'-phosphate serves as cofactor.

It localises to the cytoplasm. The catalysed reaction is (S)-4-amino-5-oxopentanoate = 5-aminolevulinate. It functions in the pathway porphyrin-containing compound metabolism; protoporphyrin-IX biosynthesis; 5-aminolevulinate from L-glutamyl-tRNA(Glu): step 2/2. The chain is Glutamate-1-semialdehyde 2,1-aminomutase from Pseudarthrobacter chlorophenolicus (strain ATCC 700700 / DSM 12829 / CIP 107037 / JCM 12360 / KCTC 9906 / NCIMB 13794 / A6) (Arthrobacter chlorophenolicus).